The chain runs to 110 residues: Nucleoid-associated protein Sfum_2790 (110 aa).

This sequence belongs to the YbaB/EbfC family. In terms of assembly, homodimer.

Its subcellular location is the cytoplasm. It is found in the nucleoid. Functionally, binds to DNA and alters its conformation. May be involved in regulation of gene expression, nucleoid organization and DNA protection. The protein is Nucleoid-associated protein Sfum_2790 of Syntrophobacter fumaroxidans (strain DSM 10017 / MPOB).